Consider the following 180-residue polypeptide: NADH-quinone oxidoreductase subunit I (180 aa).

2 consecutive 4Fe-4S ferredoxin-type domains span residues leucine 50–alanine 80 and glutamate 90–aspartate 119. [4Fe-4S] cluster is bound by residues cysteine 60, cysteine 63, cysteine 66, cysteine 70, cysteine 99, cysteine 102, cysteine 105, and cysteine 109.

The protein belongs to the complex I 23 kDa subunit family. NDH-1 is composed of 13 different subunits. Subunits NuoA, H, J, K, L, M, N constitute the membrane sector of the complex. [4Fe-4S] cluster is required as a cofactor.

It is found in the cell inner membrane. It carries out the reaction a quinone + NADH + 5 H(+)(in) = a quinol + NAD(+) + 4 H(+)(out). Functionally, NDH-1 shuttles electrons from NADH, via FMN and iron-sulfur (Fe-S) centers, to quinones in the respiratory chain. The immediate electron acceptor for the enzyme in this species is believed to be ubiquinone. Couples the redox reaction to proton translocation (for every two electrons transferred, four hydrogen ions are translocated across the cytoplasmic membrane), and thus conserves the redox energy in a proton gradient. This is NADH-quinone oxidoreductase subunit I from Shigella sonnei (strain Ss046).